The sequence spans 635 residues: Probable monoacyl phosphatidylinositol tetramannoside-binding protein LpqW (635 aa).

The first 26 residues, Met1–Ala26, serve as a signal peptide directing secretion. Disordered stretches follow at residues Pro32–Pro52, Asn389–Glu412, and Asn511–Ala551. 2 stretches are compositionally biased toward low complexity: residues Thr390 to Pro411 and Asn511 to Thr531.

This sequence belongs to the bacterial solute-binding protein 5 family.

It participates in phospholipid metabolism; phosphatidylinositol metabolism. Its function is as follows. May directly or indirectly regulate the accessibility of the key branch point intermediate, monoacyl phosphatidylinositol tetramannoside (AcPIM4), to the elongating alpha-1,6 mannosyltransferases which could regulate the lipoarabinomannans (LAMs) biosynthesis. In Mycobacterium tuberculosis (strain CDC 1551 / Oshkosh), this protein is Probable monoacyl phosphatidylinositol tetramannoside-binding protein LpqW (lpqW).